The following is a 566-amino-acid chain: Arginine--tRNA ligase (566 aa).

Positions 121–131 (ANPNGPFHIGH) match the 'HIGH' region motif.

This sequence belongs to the class-I aminoacyl-tRNA synthetase family.

Its subcellular location is the cytoplasm. It catalyses the reaction tRNA(Arg) + L-arginine + ATP = L-arginyl-tRNA(Arg) + AMP + diphosphate. The chain is Arginine--tRNA ligase from Methanococcus maripaludis (strain DSM 14266 / JCM 13030 / NBRC 101832 / S2 / LL).